The following is a 342-amino-acid chain: Phenylalanine--tRNA ligase alpha subunit (342 aa).

Glu257 provides a ligand contact to Mg(2+).

It belongs to the class-II aminoacyl-tRNA synthetase family. Phe-tRNA synthetase alpha subunit type 1 subfamily. In terms of assembly, tetramer of two alpha and two beta subunits. Mg(2+) is required as a cofactor.

The protein localises to the cytoplasm. It catalyses the reaction tRNA(Phe) + L-phenylalanine + ATP = L-phenylalanyl-tRNA(Phe) + AMP + diphosphate + H(+). The protein is Phenylalanine--tRNA ligase alpha subunit (pheS) of Chlamydia trachomatis serovar D (strain ATCC VR-885 / DSM 19411 / UW-3/Cx).